Consider the following 163-residue polypeptide: Urease accessory protein UreE (163 aa).

The disordered stretch occupies residues 144–163 (QPEPGAYGGSSAGSHDGHHH).

This sequence belongs to the UreE family.

The protein resides in the cytoplasm. Its function is as follows. Involved in urease metallocenter assembly. Binds nickel. Probably functions as a nickel donor during metallocenter assembly. The sequence is that of Urease accessory protein UreE from Aliivibrio fischeri (strain ATCC 700601 / ES114) (Vibrio fischeri).